A 182-amino-acid chain; its full sequence is N-alpha-acetyltransferase daf-31 (182 aa).

Positions 1 to 152 constitute an N-acetyltransferase domain; it reads MNIRCARVDD…DAYAMRRDLA (152 aa). Residues 162–182 are disordered; the sequence is PADREAYTTAKTTDDKKKNRS.

This sequence belongs to the acetyltransferase family. ARD1 subfamily. In terms of assembly, component of the N-terminal acetyltransferase A (NatA) complex. Expressed in head and tail hypodermal cells, hypodermal seam cells, pharynx, intestine and head and tail neurons.

The enzyme catalyses N-terminal glycyl-[protein] + acetyl-CoA = N-terminal N(alpha)-acetylglycyl-[protein] + CoA + H(+). The catalysed reaction is N-terminal L-alanyl-[protein] + acetyl-CoA = N-terminal N(alpha)-acetyl-L-alanyl-[protein] + CoA + H(+). It carries out the reaction N-terminal L-seryl-[protein] + acetyl-CoA = N-terminal N(alpha)-acetyl-L-seryl-[protein] + CoA + H(+). It catalyses the reaction N-terminal L-valyl-[protein] + acetyl-CoA = N-terminal N(alpha)-acetyl-L-valyl-[protein] + CoA + H(+). The enzyme catalyses N-terminal L-cysteinyl-[protein] + acetyl-CoA = N-terminal N(alpha)-acetyl-L-cysteinyl-[protein] + CoA + H(+). The catalysed reaction is N-terminal L-threonyl-[protein] + acetyl-CoA = N-terminal N(alpha)-acetyl-L-threonyl-[protein] + CoA + H(+). Functionally, catalytic subunit of the N-terminal acetyltransferase A (NatA) complex which displays alpha (N-terminal) acetyltransferase activity. Plays a role in regulating larval development, metabolism and longevity. Functions downstream or alongside daf-3, daf-12 and daf-16 in the dauer formation pathway. Functions upstream of daf-15 to enable animal development. In Caenorhabditis elegans, this protein is N-alpha-acetyltransferase daf-31.